A 396-amino-acid polypeptide reads, in one-letter code: Elongation factor Tu (396 aa).

Residues 10-206 form the tr-type G domain; sequence KPHVNIGTIG…AVDESVPDPV (197 aa). The interval 19–26 is G1; that stretch reads GHVDHGKT. 19-26 contributes to the GTP binding site; sequence GHVDHGKT. T26 lines the Mg(2+) pocket. The segment at 62–66 is G2; it reads GITIN. The tract at residues 83 to 86 is G3; the sequence is DAPG. Residues 83–87 and 138–141 each bind GTP; these read DAPGH and NKSD. The segment at 138–141 is G4; sequence NKSD. Residues 176 to 178 form a G5 region; sequence SGL.

This sequence belongs to the TRAFAC class translation factor GTPase superfamily. Classic translation factor GTPase family. EF-Tu/EF-1A subfamily. Monomer.

It is found in the cytoplasm. It catalyses the reaction GTP + H2O = GDP + phosphate + H(+). GTP hydrolase that promotes the GTP-dependent binding of aminoacyl-tRNA to the A-site of ribosomes during protein biosynthesis. The sequence is that of Elongation factor Tu from Paenarthrobacter aurescens (strain TC1).